Reading from the N-terminus, the 448-residue chain is Probable glycine dehydrogenase (decarboxylating) subunit 1 (448 aa).

It belongs to the GcvP family. N-terminal subunit subfamily. As to quaternary structure, the glycine cleavage system is composed of four proteins: P, T, L and H. In this organism, the P 'protein' is a heterodimer of two subunits.

The catalysed reaction is N(6)-[(R)-lipoyl]-L-lysyl-[glycine-cleavage complex H protein] + glycine + H(+) = N(6)-[(R)-S(8)-aminomethyldihydrolipoyl]-L-lysyl-[glycine-cleavage complex H protein] + CO2. The glycine cleavage system catalyzes the degradation of glycine. The P protein binds the alpha-amino group of glycine through its pyridoxal phosphate cofactor; CO(2) is released and the remaining methylamine moiety is then transferred to the lipoamide cofactor of the H protein. This chain is Probable glycine dehydrogenase (decarboxylating) subunit 1, found in Staphylococcus aureus (strain USA300).